The chain runs to 240 residues: Serine protease SplB (240 aa).

The signal sequence occupies residues 1 to 36; the sequence is MNKNVVIKSLATLTILTSVTGIGTTLVEEVQQTAKA. Active-site charge relay system residues include His-75, Asp-113, and Ser-193.

Belongs to the peptidase S1B family.

The protein localises to the secreted. Functionally, serine protease that cleaves specifically after the sequence Trp-Glu-Leu-Gln. In Staphylococcus aureus (strain Mu3 / ATCC 700698), this protein is Serine protease SplB (splB).